We begin with the raw amino-acid sequence, 102 residues long: Ferredoxin, 2Fe-2S (102 aa).

Residues Cys11, Cys24, Cys56, and Cys60 each coordinate [2Fe-2S] cluster.

It belongs to the 2Fe2S Shethna-type ferredoxin family. [2Fe-2S] cluster serves as cofactor.

Ferredoxins are iron-sulfur proteins that transfer electrons in a wide variety of metabolic reactions. This chain is Ferredoxin, 2Fe-2S, found in Clostridium pasteurianum.